The primary structure comprises 201 residues: Adenylyl-sulfate kinase (201 aa).

Residue 35-42 coordinates ATP; that stretch reads GLSGSGKS. Serine 109 serves as the catalytic Phosphoserine intermediate.

This sequence belongs to the APS kinase family.

The catalysed reaction is adenosine 5'-phosphosulfate + ATP = 3'-phosphoadenylyl sulfate + ADP + H(+). The protein operates within sulfur metabolism; hydrogen sulfide biosynthesis; sulfite from sulfate: step 2/3. Functionally, catalyzes the synthesis of activated sulfate. The chain is Adenylyl-sulfate kinase from Prochlorococcus marinus (strain SARG / CCMP1375 / SS120).